Consider the following 271-residue polypeptide: Gap junction beta-5 protein (271 aa).

Residues 1–20 (MNWSVFEGLLSGVNKYSTAF) are Cytoplasmic-facing. Residues 21–40 (GRIWLSLVFVFRVLVYLVTA) traverse the membrane as a helical segment. At 41 to 75 (ERVWGDDQKDFDCNTRQPGCTNVCYDEFFPVSHVR) the chain is on the extracellular side. The chain crosses the membrane as a helical span at residues 76–98 (LWALQLILVTCPSLLVVMHVAYR). At 99-124 (KAREKKYQQEVGKGYLYPNPGKKRGG) the chain is on the cytoplasmic side. A helical transmembrane segment spans residues 125–147 (LWWTYVCSLLFKATIDIIFLYLF). The Extracellular segment spans residues 148 to 182 (HAFYPRYTLPSMVKCHSAPCPNTVDCFIAKPSEKN). The chain crosses the membrane as a helical span at residues 183–205 (IFIVFMLVTAIVCILLNLVELLY). The Cytoplasmic portion of the chain corresponds to 206-271 (LVIKRCSECA…PRAHVKKTIL (66 aa)). Positions 217–237 (AKRPPTAHAKNDPNWANPSSK) are disordered.

This sequence belongs to the connexin family. Beta-type (group I) subfamily. A connexon is composed of a hexamer of connexins. As to expression, expressed in skin.

Its subcellular location is the cell membrane. The protein localises to the cell junction. The protein resides in the gap junction. Its function is as follows. One gap junction consists of a cluster of closely packed pairs of transmembrane channels, the connexons, through which materials of low MW diffuse from one cell to a neighboring cell. The chain is Gap junction beta-5 protein (Gjb5) from Rattus norvegicus (Rat).